The sequence spans 363 residues: Protein-arginine kinase (363 aa).

Residues 24 to 255 form the Phosphagen kinase C-terminal domain; it reads IVLSSRIRLA…QQLIAQERAA (232 aa). ATP-binding positions include 27–31, histidine 92, arginine 126, 177–181, and 208–213; these read SSRIR, RASVM, and RGTYGE. Positions 338 to 343 match the RDXXRA motif of the pArg binding pocket involved in allosteric regulation motif; that stretch reads RDVRRA.

This sequence belongs to the ATP:guanido phosphotransferase family.

It carries out the reaction L-arginyl-[protein] + ATP = N(omega)-phospho-L-arginyl-[protein] + ADP + H(+). Its activity is regulated as follows. Appears to be allosterically activated by the binding of pArg-containing polypeptides to the pArg-binding pocket localized in the C-terminal domain of McsB. In terms of biological role, catalyzes the specific phosphorylation of arginine residues in a large number of proteins. Is part of the bacterial stress response system. Protein arginine phosphorylation has a physiologically important role and is involved in the regulation of many critical cellular processes, such as protein homeostasis, motility, competence, and stringent and stress responses, by regulating gene expression and protein activity. This Geobacillus kaustophilus (strain HTA426) protein is Protein-arginine kinase.